The chain runs to 359 residues: Chondroadherin (359 aa).

The N-terminal stretch at 1-22 (MVRPMLLLSLGLLAGLLPALAA) is a signal peptide. C23 and C38 are joined by a disulfide. Positions 23–52 (CPQNCHCHSDLQHVICDKVGLQKIPKVSEK) constitute an LRRNT domain. LRR repeat units lie at residues 76–97 (NLVS…AFRG), 100–121 (QLIY…AFDD), 124–145 (ELTY…LLSP), 148–169 (NLFI…AFQG), 172–193 (DLRW…ALDD), 196–217 (NLAK…ALSK), 220–241 (VVEE…AFQS), 245–266 (YLET…AFLG), and 269–290 (TLKH…FPFD). S144 carries an O-linked (GalNAc...) serine glycan. The LRRCT domain maps to 300-348 (NPWKCTCQLRGLRRWLEAKASRPDATCASPAKFKGQHIRDTDAFRSCKF). 2 disulfides stabilise this stretch: C304-C346 and C306-C326.

Belongs to the small leucine-rich proteoglycan (SLRP) family. SLRP class IV subfamily. As to quaternary structure, mostly monomeric. Interacts with collagen type II. Present in chondrocytes at all ages.

It is found in the secreted. Its subcellular location is the extracellular space. It localises to the extracellular matrix. Promotes attachment of chondrocytes, fibroblasts, and osteoblasts. This binding is mediated (at least for chondrocytes and fibroblasts) by the integrin alpha(2)beta(1). May play an important role in the regulation of chondrocyte growth and proliferation. This is Chondroadherin (CHAD) from Homo sapiens (Human).